We begin with the raw amino-acid sequence, 305 residues long: Mycothiol acetyltransferase (305 aa).

2 consecutive N-acetyltransferase domains span residues 10–153 (DRLD…LVVP) and 156–305 (ISLR…YARA). Residue Glu-38 coordinates 1D-myo-inositol 2-(L-cysteinylamino)-2-deoxy-alpha-D-glucopyranoside. 82-84 (LAV) contributes to the acetyl-CoA binding site. 1D-myo-inositol 2-(L-cysteinylamino)-2-deoxy-alpha-D-glucopyranoside-binding residues include Glu-183, Lys-225, and Glu-238. Acetyl-CoA is bound by residues 242 to 244 (VAI) and 249 to 255 (QGRGLGR). Residue Tyr-276 participates in 1D-myo-inositol 2-(L-cysteinylamino)-2-deoxy-alpha-D-glucopyranoside binding. 281-286 (NESALH) provides a ligand contact to acetyl-CoA.

Belongs to the acetyltransferase family. MshD subfamily. In terms of assembly, monomer.

It carries out the reaction 1D-myo-inositol 2-(L-cysteinylamino)-2-deoxy-alpha-D-glucopyranoside + acetyl-CoA = mycothiol + CoA + H(+). In terms of biological role, catalyzes the transfer of acetyl from acetyl-CoA to desacetylmycothiol (Cys-GlcN-Ins) to form mycothiol. The sequence is that of Mycothiol acetyltransferase from Rhodococcus jostii (strain RHA1).